The chain runs to 507 residues: ATP synthase subunit alpha, chloroplastic (507 aa).

170–177 provides a ligand contact to ATP; it reads GDRQTGKT.

It belongs to the ATPase alpha/beta chains family. In terms of assembly, F-type ATPases have 2 components, CF(1) - the catalytic core - and CF(0) - the membrane proton channel. CF(1) has five subunits: alpha(3), beta(3), gamma(1), delta(1), epsilon(1). CF(0) has four main subunits: a, b, b' and c.

Its subcellular location is the plastid. The protein localises to the chloroplast thylakoid membrane. The enzyme catalyses ATP + H2O + 4 H(+)(in) = ADP + phosphate + 5 H(+)(out). In terms of biological role, produces ATP from ADP in the presence of a proton gradient across the membrane. The alpha chain is a regulatory subunit. This chain is ATP synthase subunit alpha, chloroplastic, found in Oenothera glazioviana (Large-flowered evening primrose).